A 329-amino-acid chain; its full sequence is Methionyl-tRNA formyltransferase (329 aa).

A (6S)-5,6,7,8-tetrahydrofolate-binding site is contributed by 118 to 121 (SLLP).

It belongs to the Fmt family.

It catalyses the reaction L-methionyl-tRNA(fMet) + (6R)-10-formyltetrahydrofolate = N-formyl-L-methionyl-tRNA(fMet) + (6S)-5,6,7,8-tetrahydrofolate + H(+). Functionally, attaches a formyl group to the free amino group of methionyl-tRNA(fMet). The formyl group appears to play a dual role in the initiator identity of N-formylmethionyl-tRNA by promoting its recognition by IF2 and preventing the misappropriation of this tRNA by the elongation apparatus. The polypeptide is Methionyl-tRNA formyltransferase (Corynebacterium urealyticum (strain ATCC 43042 / DSM 7109)).